Here is a 675-residue protein sequence, read N- to C-terminus: DNA ligase (675 aa).

NAD(+) contacts are provided by residues 36–40, 85–86, and Glu118; these read DAVYD and SL. Lys120 functions as the N6-AMP-lysine intermediate in the catalytic mechanism. NAD(+) is bound by residues Arg141, Glu178, Lys298, and Lys322. Zn(2+) contacts are provided by Cys416, Cys419, Cys434, and Cys439. The BRCT domain occupies 598–675; it reads TQPQTLSGKT…SEADLLALLQ (78 aa).

Belongs to the NAD-dependent DNA ligase family. LigA subfamily. Mg(2+) is required as a cofactor. Mn(2+) serves as cofactor.

The enzyme catalyses NAD(+) + (deoxyribonucleotide)n-3'-hydroxyl + 5'-phospho-(deoxyribonucleotide)m = (deoxyribonucleotide)n+m + AMP + beta-nicotinamide D-nucleotide.. Functionally, DNA ligase that catalyzes the formation of phosphodiester linkages between 5'-phosphoryl and 3'-hydroxyl groups in double-stranded DNA using NAD as a coenzyme and as the energy source for the reaction. It is essential for DNA replication and repair of damaged DNA. This is DNA ligase from Acaryochloris marina (strain MBIC 11017).